Consider the following 234-residue polypeptide: Cyclin-J18 (234 aa).

This sequence belongs to the cyclin family.

The sequence is that of Cyclin-J18 (CYCJ18) from Arabidopsis thaliana (Mouse-ear cress).